Here is a 237-residue protein sequence, read N- to C-terminus: Apoptosis regulator OPG045 (237 aa).

This sequence belongs to the orthopoxvirus OPG045 family. Interacts with host BAK1, BAX and BID.

The protein localises to the host mitochondrion outer membrane. It is found in the host cytoplasm. Functionally, plays a role in the inhibition of host apoptosis. Interacts with host BAX and thereby inhibits its activity. The polypeptide is Apoptosis regulator OPG045 (OPG045) (Homo sapiens (Human)).